A 757-amino-acid chain; its full sequence is Serine/threonine-protein phosphatase with EF-hands 2 (757 aa).

Positions 21–46 (KAAALIQRWYRRYMARLEMRRRCTWN) constitute an IQ domain. The tract at residues 128-544 (ATALVEAFRL…PHIVQYQANK (417 aa)) is catalytic. The Mn(2+) site is built by aspartate 179, histidine 181, aspartate 208, and asparagine 240. Histidine 241 (proton donor) is an active-site residue. Histidine 292 provides a ligand contact to Mn(2+). Residues 318-349 (CKTRKESENREEQKRKDNQTSSGQKPTPWFLP) are disordered. Basic and acidic residues predominate over residues 321 to 335 (RKESENREEQKRKDN). Histidine 492 lines the Mn(2+) pocket. 3 EF-hand domains span residues 572 to 607 (AHSS…VLHL), 656 to 691 (RNRS…FSSH), and 696 to 731 (ITDD…VEQS). Aspartate 585, aspartate 587, serine 589, aspartate 596, aspartate 669, aspartate 671, serine 673, glutamate 680, aspartate 709, asparagine 711, aspartate 713, histidine 715, and glutamate 720 together coordinate Ca(2+).

It belongs to the PPP phosphatase family. It depends on Mn(2+) as a cofactor. As to expression, detected in retina, more specifically in photoreceptors.

It catalyses the reaction O-phospho-L-seryl-[protein] + H2O = L-seryl-[protein] + phosphate. It carries out the reaction O-phospho-L-threonyl-[protein] + H2O = L-threonyl-[protein] + phosphate. With respect to regulation, activated by calcium. Functionally, may play a role in phototransduction. May dephosphorylate photoactivated rhodopsin. May function as a calcium sensing regulator of ionic currents, energy production or synaptic transmission. This Mus musculus (Mouse) protein is Serine/threonine-protein phosphatase with EF-hands 2 (Ppef2).